A 171-amino-acid chain; its full sequence is S-ribosylhomocysteine lyase (171 aa).

3 residues coordinate Fe cation: His-54, His-58, and Cys-128.

It belongs to the LuxS family. Homodimer. Requires Fe cation as cofactor.

The catalysed reaction is S-(5-deoxy-D-ribos-5-yl)-L-homocysteine = (S)-4,5-dihydroxypentane-2,3-dione + L-homocysteine. Its function is as follows. Involved in the synthesis of autoinducer 2 (AI-2) which is secreted by bacteria and is used to communicate both the cell density and the metabolic potential of the environment. The regulation of gene expression in response to changes in cell density is called quorum sensing. Catalyzes the transformation of S-ribosylhomocysteine (RHC) to homocysteine (HC) and 4,5-dihydroxy-2,3-pentadione (DPD). The protein is S-ribosylhomocysteine lyase of Cronobacter sakazakii (strain ATCC BAA-894) (Enterobacter sakazakii).